The chain runs to 87 residues: U1-theraphotoxin-Ct1a (87 aa).

A signal peptide spans 1–23 (MKTFTLIAILTCAVLVIFHAAAA). Positions 24–48 (EELEVQDVIQPEDTLTGLATLDEDR) are excised as a propeptide.

It belongs to the neurotoxin 12 (Hwtx-2) family. 03 (juruin) subfamily. Contains 3 disulfide bonds. Two different connectivities are observed in similar proteins (C1-C3, C2-C5, C4-C6 or C1-C4, C2-C5, C3-C6). In terms of tissue distribution, expressed by the venom gland.

Its subcellular location is the secreted. This toxin causes paralysis and death to sheep blowflies. It may inhibit voltage-gated calcium channels. The sequence is that of U1-theraphotoxin-Ct1a from Coremiocnemis tropix (Australian tarantula spider).